Reading from the N-terminus, the 431-residue chain is MRVLLVGAGGRENAIAEVLARDAELYVVAGHKNPGIARLAKDYALAKETDVPRVLDFALKWGVDMAFIGPEAPLEKGIVNVLEENGVPTVGPTREAAMLETNKAFARWLMEEYKIPGRKLFKVFDDVSEMKSWIDDFGRPVVVKPLGLTGGKGVKVVGYQLKDNEEAKAYAEELIKRDGKVLIEERTDGVEFTFQVFTDGKRVVPMPLAQDYPHAYEGDVGPITGGMGSYSCEDHRLPFITKEDYEKALETLKATVEAMRKNGTPYKGILYGQFMLAKDEPKIIEFNARFGDPEAMNVLPILKRSLVEIGEEIVDGNLKGAEFERKATVVKYIAPKGYPTNPVRGIKLHVDEAKIREEGARVYYASLDENFRMLGSRALAVVGIADSLEEAERIASAGIRHVRGEIFYRKDVGTRESIARRIELVRAMRGE.

The region spanning 107-315 (RWLMEEYKIP…LVEIGEEIVD (209 aa)) is the ATP-grasp domain. Residue 134 to 193 (IDDFGRPVVVKPLGLTGGKGVKVVGYQLKDNEEAKAYAEELIKRDGKVLIEERTDGVEFT) participates in ATP binding. Positions 273, 285, and 287 each coordinate Mg(2+). Mn(2+) contacts are provided by Gln273, Glu285, and Asn287.

The protein belongs to the GARS family. Requires Mg(2+) as cofactor. Mn(2+) serves as cofactor.

It carries out the reaction 5-phospho-beta-D-ribosylamine + glycine + ATP = N(1)-(5-phospho-beta-D-ribosyl)glycinamide + ADP + phosphate + H(+). It participates in purine metabolism; IMP biosynthesis via de novo pathway; N(1)-(5-phospho-D-ribosyl)glycinamide from 5-phospho-alpha-D-ribose 1-diphosphate: step 2/2. The chain is Phosphoribosylamine--glycine ligase from Thermococcus kodakarensis (strain ATCC BAA-918 / JCM 12380 / KOD1) (Pyrococcus kodakaraensis (strain KOD1)).